The following is a 211-amino-acid chain: NADH-quinone oxidoreductase subunit I (211 aa).

The tract at residues Met-1–Arg-27 is disordered. 4Fe-4S ferredoxin-type domains lie at Leu-71–Ala-101 and Arg-117–Asp-146. 8 residues coordinate [4Fe-4S] cluster: Cys-81, Cys-84, Cys-87, Cys-91, Cys-126, Cys-129, Cys-132, and Cys-136.

Belongs to the complex I 23 kDa subunit family. In terms of assembly, NDH-1 is composed of 14 different subunits. Subunits NuoA, H, J, K, L, M, N constitute the membrane sector of the complex. [4Fe-4S] cluster is required as a cofactor.

The protein localises to the cell membrane. The enzyme catalyses a quinone + NADH + 5 H(+)(in) = a quinol + NAD(+) + 4 H(+)(out). Functionally, NDH-1 shuttles electrons from NADH, via FMN and iron-sulfur (Fe-S) centers, to quinones in the respiratory chain. The immediate electron acceptor for the enzyme in this species is believed to be menaquinone. Couples the redox reaction to proton translocation (for every two electrons transferred, four hydrogen ions are translocated across the cytoplasmic membrane), and thus conserves the redox energy in a proton gradient. In Mycobacterium tuberculosis (strain ATCC 25177 / H37Ra), this protein is NADH-quinone oxidoreductase subunit I.